The following is a 676-amino-acid chain: RNA helicase NPH-II (676 aa).

The region spanning 172–347 is the Helicase ATP-binding domain; it reads FSAWISHRPV…VFLPNPAFIH (176 aa). 185 to 192 provides a ligand contact to ATP; it reads GGTGVGKT. Positions 296 to 299 match the DEXH box motif; the sequence is DEVH. A Helicase C-terminal domain is found at 366 to 535; it reads NPSSRMAYIE…NYILYANKFN (170 aa).

The protein belongs to the DEAD box helicase family. DEAH subfamily. In terms of assembly, monomer.

The protein localises to the virion. It catalyses the reaction ATP + H2O = ADP + phosphate + H(+). In terms of biological role, NTP-dependent helicase that catalyzes unidirectional unwinding of 3'tailed duplex RNAs and plays an important role during transcription of early mRNAs, presumably by preventing R-loop formation behind the elongating RNA polymerase. Might also play a role in the export of newly synthesized mRNA chains out of the core into the cytoplasm. Required for replication and propagation of viral particles. The chain is RNA helicase NPH-II (OPG084) from Vaccinia virus (strain Copenhagen) (VACV).